The following is a 263-amino-acid chain: Troponin T, fast skeletal muscle isoforms (263 aa).

Residues 1–26 (MSDTEEVEHGEEEYEEEAHEAEEVHE) show a composition bias toward acidic residues. Disordered regions lie at residues 1-66 (MSDT…FDDI), 107-188 (RAER…VLAE), and 243-263 (DQAQKHSKKAGAKGKVGGRWK). Ser-2 is subject to N-acetylserine. 3 stretches are compositionally biased toward basic and acidic residues: residues 56–66 (PEGEKVDFDDI), 107–149 (RAER…DDLK), and 177–188 (TARETKKKVLAE). A compositionally biased stretch (basic residues) spans 247 to 263 (KHSKKAGAKGKVGGRWK).

This sequence belongs to the troponin T family.

Troponin T is the tropomyosin-binding subunit of troponin, the thin filament regulatory complex which confers calcium-sensitivity to striated muscle actomyosin ATPase activity. The polypeptide is Troponin T, fast skeletal muscle isoforms (TNNT3) (Gallus gallus (Chicken)).